Here is a 171-residue protein sequence, read N- to C-terminus: MDYFTLFGLPARYQLDTQALSLRFQDLQRQYHPDKFASGSQAEQLAAVQQSATINQAWQTLRHPLMRAEYLLSLHGFDLASEQHTVRDTAFLMEQLELREELDEIEQAKDEARLESFIKRVKKMFDTRHQLMVEQLDNEAWDAAADTVRKLRFLDKLRSSAEQLEEKLLDF.

In terms of domain architecture, J spans 2-74 (DYFTLFGLPA…LMRAEYLLSL (73 aa)).

The protein belongs to the HscB family. Interacts with HscA and stimulates its ATPase activity. Interacts with IscU.

Functionally, co-chaperone involved in the maturation of iron-sulfur cluster-containing proteins. Seems to help targeting proteins to be folded toward HscA. The sequence is that of Co-chaperone protein HscB from Escherichia coli (strain SE11).